The following is a 360-amino-acid chain: Vignain (360 aa).

Positions 1–20 (MQKFILLALSLALVLAITES) are cleaved as a signal peptide. The propeptide at 21 to 124 (FDFHEKELES…NGTFMYEKVD (104 aa)) is activation peptide. Asn115 is a glycosylation site (N-linked (GlcNAc...) asparagine). Intrachain disulfides connect Cys147-Cys189, Cys181-Cys222, and Cys280-Cys332. The active site involves Cys150. Active-site residues include His286 and Asn307. The tract at residues 341–360 (PIKKSSNNPSGIKSSPKDEL) is disordered. The span at 344 to 353 (KSSNNPSGIK) shows a compositional bias: polar residues. Positions 354–360 (SSPKDEL) are cleaved as a propeptide — removed in mature form. Residues 357–360 (KDEL) form a prevents secretion from ER region.

Belongs to the peptidase C1 family. The potential N-glycosylation site at Asn-115 is not glycosylated.

Its subcellular location is the cytoplasmic vesicle. Low pH triggers activation of the protease and removal of the propeptide and the KDEL motif. Its function is as follows. Involved in programmed cell death. Shows a pronounced preference for hydrophobic residues in the P2 position and no obvious preference in the P1 position of the cleavage site. Accepts proline at the P1 and P1' positions. In Ricinus communis (Castor bean), this protein is Vignain (CYSEP).